The sequence spans 306 residues: Ornithine carbamoyltransferase (306 aa).

Carbamoyl phosphate-binding positions include 51-54, Gln78, Arg102, and 129-132; these read STRT and HPVQ. L-ornithine contacts are provided by residues Asn159, Asp223, and 227-228; that span reads SM. Carbamoyl phosphate contacts are provided by residues 263 to 264 and Arg291; that span reads CL.

It belongs to the aspartate/ornithine carbamoyltransferase superfamily. OTCase family.

It localises to the cytoplasm. The enzyme catalyses carbamoyl phosphate + L-ornithine = L-citrulline + phosphate + H(+). It functions in the pathway amino-acid biosynthesis; L-arginine biosynthesis; L-arginine from L-ornithine and carbamoyl phosphate: step 1/3. Its function is as follows. Reversibly catalyzes the transfer of the carbamoyl group from carbamoyl phosphate (CP) to the N(epsilon) atom of ornithine (ORN) to produce L-citrulline. The polypeptide is Ornithine carbamoyltransferase (Sulfurovum sp. (strain NBC37-1)).